Reading from the N-terminus, the 175-residue chain is ATP synthase subunit b (175 aa).

A helical membrane pass occupies residues 24–44; sequence LVLWQIAATVILIIVVRIFLW.

This sequence belongs to the ATPase B chain family. As to quaternary structure, F-type ATPases have 2 components, F(1) - the catalytic core - and F(0) - the membrane proton channel. F(1) has five subunits: alpha(3), beta(3), gamma(1), delta(1), epsilon(1). F(0) has three main subunits: a(1), b(2) and c(10-14). The alpha and beta chains form an alternating ring which encloses part of the gamma chain. F(1) is attached to F(0) by a central stalk formed by the gamma and epsilon chains, while a peripheral stalk is formed by the delta and b chains.

The protein localises to the cell membrane. F(1)F(0) ATP synthase produces ATP from ADP in the presence of a proton or sodium gradient. F-type ATPases consist of two structural domains, F(1) containing the extramembraneous catalytic core and F(0) containing the membrane proton channel, linked together by a central stalk and a peripheral stalk. During catalysis, ATP synthesis in the catalytic domain of F(1) is coupled via a rotary mechanism of the central stalk subunits to proton translocation. In terms of biological role, component of the F(0) channel, it forms part of the peripheral stalk, linking F(1) to F(0). The protein is ATP synthase subunit b of Acholeplasma laidlawii (strain PG-8A).